The chain runs to 1161 residues: Lethal(2) giant larvae protein (1161 aa).

The phospho-regulated basic and hydrophobic (PRBH) motif stretch occupies residues Asp-15–Gln-86. 8 WD repeats span residues Ser-39–Gln-72, Glu-82–Leu-128, Val-131–Ile-167, Ser-189–Tyr-223, Ser-231–Pro-263, Ser-278–Val-320, Val-328–Leu-358, and Thr-380–Lys-464. Residues Ser-473 and Ser-484 each carry the phosphoserine modification. WD repeat units lie at residues Lys-513–Leu-594 and Thr-603–Ser-664. Ser-679 carries the post-translational modification Phosphoserine. WD repeat units follow at residues Val-708–Gln-778, Gly-787–Ile-832, Leu-837–Ala-927, and Cys-941–Thr-964. Phosphoserine occurs at positions 808, 869, 876, 887, 889, and 893. Ser-1013 is modified (phosphoserine). The disordered stretch occupies residues Glu-1141–Phe-1161.

This sequence belongs to the WD repeat L(2)GL family. As to quaternary structure, may form multimeric complexes. Interacts with mahj. Interacts with aPKC; leading to phosphorylation. Interacts with ball. Phosphorylated by aPKC which lowers lipid affinity and promotes dissociation from the cell cortex. In developing oocytes, aPKC-mediated phosphorylation restricts activity to the oocyte posterior and is required for oocyte polarity formation. In terms of tissue distribution, expressed in the epithelial cells of the digestive tract and in gonads.

Its subcellular location is the cytoplasm. It localises to the cell cortex. Functionally, essential for the development of polarized epithelia, for cell polarity associated with asymmetric cell division of neuroblasts during development, and for oocyte polarity formation. Promotes the formation of actin-rich projections at the oocyte cortex and the posterior enrichment of par-1 which is required for oocyte polarization. Regulates the localization of axis-specifying morphogens such as stau and grk. Has an essential role in control of cell proliferation and differentiation during development and could act as a tumor suppressor. In terms of biological role, has an accessory function in control of cell proliferation and differentiation during development. The sequence is that of Lethal(2) giant larvae protein (l(2)gl) from Drosophila melanogaster (Fruit fly).